Consider the following 377-residue polypeptide: Opsin-1 (377 aa).

Residues 1–58 are Extracellular-facing; it reads MDPGPGLAALQAWAAKSPAYGAANQTVVDKVPPDMMHMIDPHWYQFPPMNPLWHALLG. The N-linked (GlcNAc...) asparagine glycan is linked to N24. A helical transmembrane segment spans residues 59–79; the sequence is FTIGVLGFVSISGNGMVIYIF. The Cytoplasmic portion of the chain corresponds to 80–92; the sequence is MSTKSLKTPSNLL. A helical membrane pass occupies residues 93–113; it reads VVNLAFSDFLMMCAMSPAMVV. The Extracellular portion of the chain corresponds to 114–129; that stretch reads NCYYETWVWGPFACEL. Residues C127 and C204 are joined by a disulfide bond. A helical membrane pass occupies residues 130-150; that stretch reads YACAGSLFGCASIWTMTMIAF. The Cytoplasmic portion of the chain corresponds to 151 to 169; that stretch reads DRYNVIVKGIAAKPMTSNG. A helical membrane pass occupies residues 170-190; that stretch reads ALLRILGIWVFSLAWTLLPFF. The Extracellular portion of the chain corresponds to 191 to 220; sequence GWNRYVPEGNMTACGTDYLSKSWVSRSYIL. N200 carries an N-linked (GlcNAc...) asparagine glycan. The helical transmembrane segment at 221-241 threads the bilayer; the sequence is IYSVFVYFLPLLLIIYSYFFI. Residues 242–280 are Cytoplasmic-facing; sequence VQAVAAHEKAMREQAKKMNVASLRSSEAANTSAECKLAK. The chain crosses the membrane as a helical span at residues 281–301; sequence VALMTISLWFMAWTPYLVINY. Over 302 to 312 the chain is Extracellular; that stretch reads TGVFESAPISP. The helical transmembrane segment at 313 to 335 threads the bilayer; sequence LATIWGSLFAKANAVYNPIVYGI. At 336–377 the chain is on the cytoplasmic side; sequence SHPKYQAALYAKFPSLQCQSAPEDAGSVASGTTAVSEEKPAA. The tract at residues 357–377 is disordered; it reads PEDAGSVASGTTAVSEEKPAA.

Belongs to the G-protein coupled receptor 1 family. Opsin subfamily. In the retina, expression is abundant and uniform in the anterior-posterior and oblique cells of the retinulae, with some expression in the proximal cells. There is no expression in the dorsal rim retinulae (at protein level).

The protein resides in the cell projection. The protein localises to the rhabdomere membrane. In terms of biological role, visual pigments are the light-absorbing molecules that mediate vision. They consist of an apoprotein, opsin, covalently linked to cis-retinal. May play a role in photoperiodic photoreception. The chain is Opsin-1 (OP1) from Manduca sexta (Tobacco hawkmoth).